Reading from the N-terminus, the 346-residue chain is Upstream stimulatory factor 2 (346 aa).

2 disordered regions span residues Met1–Glu44 and Ala215–Glu244. A compositionally biased stretch (low complexity) spans Ala11–Ala20. The segment covering Asp226–Glu244 has biased composition (basic and acidic residues). The 56-residue stretch at Arg235–Leu290 folds into the bHLH domain. Residues Leu307–Leu328 form a leucine-zipper region.

As to quaternary structure, interacts with MAF. Efficient DNA binding requires dimerization with another bHLH protein. Binds DNA as a homodimer or a heterodimer (USF1/USF2). In vivo, the USF1/USF2A heterodimer represents over 66% of the usf binding activity whereas the USF1 and USF2A homodimers represent less than 10%. The USF1/USF2B heterodimer accounted for almost 15% in some cell. Ubiquitous.

It localises to the nucleus. In terms of biological role, transcription factor that binds to a symmetrical DNA sequence (E-boxes) (5'-CACGTG-3') that is found in a variety of viral and cellular promoters. The protein is Upstream stimulatory factor 2 (USF2) of Homo sapiens (Human).